The following is a 307-amino-acid chain: Pantothenate kinase (307 aa).

An ATP-binding site is contributed by 90–97 (GSVAVGKS).

It belongs to the prokaryotic pantothenate kinase family.

The protein localises to the cytoplasm. It catalyses the reaction (R)-pantothenate + ATP = (R)-4'-phosphopantothenate + ADP + H(+). Its pathway is cofactor biosynthesis; coenzyme A biosynthesis; CoA from (R)-pantothenate: step 1/5. The sequence is that of Pantothenate kinase from Levilactobacillus brevis (strain ATCC 367 / BCRC 12310 / CIP 105137 / JCM 1170 / LMG 11437 / NCIMB 947 / NCTC 947) (Lactobacillus brevis).